Here is a 522-residue protein sequence, read N- to C-terminus: Leucine-rich repeat transmembrane neuronal protein 1 (522 aa).

The signal sequence occupies residues 1 to 34 (MDFLLLGLCLYWLLRRPSGVVLCLLGACFQMLPA). Positions 35–63 (APSGCPQLCRCEGRLLYCEALNLTEAPHN) constitute an LRRNT domain. Topologically, residues 35–427 (APSGCPQLCR…HAENAVQIHK (393 aa)) are extracellular. N-linked (GlcNAc...) asparagine glycans are attached at residues Asn-56 and Asn-63. LRR repeat units follow at residues 64 to 87 (LSGL…QFTG), 89 to 111 (MQLT…AFQK), 112 to 135 (LRRV…TFRP), 137 to 159 (PNLR…LFHG), 161 to 183 (RKLT…IFQD), 184 to 207 (CRSL…SFAG), 209 to 231 (FKLT…HFPR), 233 to 255 (ISLH…LDWV), 256 to 278 (WNLE…VFET), and 279 to 302 (VPHL…ILNS). N-linked (GlcNAc...) asparagine glycosylation occurs at Asn-130. The 52-residue stretch at 314–365 (NLWDCGRNVCALASWLNNFQGRYDGNLQCASPEYAQGEDVLDAVYAFHLCED) folds into the LRRCT domain. N-linked (GlcNAc...) asparagine glycosylation is present at Asn-380. The tract at residues 382 to 401 (SDLGPPASSATTLADGGEGQ) is disordered. Residues 428–448 (VVTGTMALIFSFLIVVLVLYV) form a helical membrane-spanning segment. The Cytoplasmic portion of the chain corresponds to 449–522 (SWKCFPASLR…HQQPARECEV (74 aa)).

The protein belongs to the LRRTM family. Predominantly expressed in forebrain regions including thalamus and cerebral cortex.

It localises to the cell membrane. The protein resides in the postsynaptic cell membrane. In terms of biological role, exhibits strong synaptogenic activity, restricted to excitatory presynaptic differentiation, acting at both pre- and postsynaptic level. The protein is Leucine-rich repeat transmembrane neuronal protein 1 (LRRTM1) of Homo sapiens (Human).